The primary structure comprises 193 residues: Holliday junction branch migration complex subunit RuvA (193 aa).

The tract at residues 1 to 64 (MIGRIAGILL…EDAHLLYGFL (64 aa)) is domain I. The interval 65–139 (TQQERTTFRE…GKLGADLGAL (75 aa)) is domain II. The flexible linker stretch occupies residues 139–143 (LAGAA). The domain III stretch occupies residues 144–193 (SPSDHATDILNALLALGYSEKEGLAAIKNVPAGTGVSEGIKLALKALSKA).

The protein belongs to the RuvA family. As to quaternary structure, homotetramer. Forms an RuvA(8)-RuvB(12)-Holliday junction (HJ) complex. HJ DNA is sandwiched between 2 RuvA tetramers; dsDNA enters through RuvA and exits via RuvB. An RuvB hexamer assembles on each DNA strand where it exits the tetramer. Each RuvB hexamer is contacted by two RuvA subunits (via domain III) on 2 adjacent RuvB subunits; this complex drives branch migration. In the full resolvosome a probable DNA-RuvA(4)-RuvB(12)-RuvC(2) complex forms which resolves the HJ.

It localises to the cytoplasm. Its function is as follows. The RuvA-RuvB-RuvC complex processes Holliday junction (HJ) DNA during genetic recombination and DNA repair, while the RuvA-RuvB complex plays an important role in the rescue of blocked DNA replication forks via replication fork reversal (RFR). RuvA specifically binds to HJ cruciform DNA, conferring on it an open structure. The RuvB hexamer acts as an ATP-dependent pump, pulling dsDNA into and through the RuvAB complex. HJ branch migration allows RuvC to scan DNA until it finds its consensus sequence, where it cleaves and resolves the cruciform DNA. The sequence is that of Holliday junction branch migration complex subunit RuvA from Burkholderia cenocepacia (strain ATCC BAA-245 / DSM 16553 / LMG 16656 / NCTC 13227 / J2315 / CF5610) (Burkholderia cepacia (strain J2315)).